The primary structure comprises 125 residues: MSGRGKGGKAKAKAKSRSSRAGLQFPVGRIHRLLRKGNYAERVGAGAPVYLAAVLEYLAAEVLELAGNAARDNKKSRIIPRHLQLAIRNDEELNKLLSGVTIAQGGVLPNIQAVLLPKKTQKAAK.

Over residues 1–18 the composition is skewed to basic residues; the sequence is MSGRGKGGKAKAKAKSRS. A disordered region spans residues 1-21; that stretch reads MSGRGKGGKAKAKAKSRSSRA. At serine 2 the chain carries N-acetylserine. An N5-methylglutamine modification is found at glutamine 104.

Belongs to the histone H2A family. In terms of assembly, the nucleosome is a histone octamer containing two molecules each of H2A, H2B, H3 and H4 assembled in one H3-H4 heterotetramer and two H2A-H2B heterodimers. The octamer wraps approximately 147 bp of DNA.

It is found in the nucleus. The protein resides in the chromosome. Core component of nucleosome. Nucleosomes wrap and compact DNA into chromatin, limiting DNA accessibility to the cellular machineries which require DNA as a template. Histones thereby play a central role in transcription regulation, DNA repair, DNA replication and chromosomal stability. DNA accessibility is regulated via a complex set of post-translational modifications of histones, also called histone code, and nucleosome remodeling. The chain is Histone H2A from Mytilus californianus (California mussel).